A 150-amino-acid chain; its full sequence is Flagellar assembly factor FliW (150 aa).

This sequence belongs to the FliW family. Interacts with translational regulator CsrA and flagellin(s).

The protein resides in the cytoplasm. In terms of biological role, acts as an anti-CsrA protein, binds CsrA and prevents it from repressing translation of its target genes, one of which is flagellin. Binds to flagellin and participates in the assembly of the flagellum. The chain is Flagellar assembly factor FliW from Leptospira interrogans serogroup Icterohaemorrhagiae serovar copenhageni (strain Fiocruz L1-130).